Reading from the N-terminus, the 144-residue chain is Large ribosomal subunit protein uL11 (144 aa).

The protein belongs to the universal ribosomal protein uL11 family. As to quaternary structure, part of the ribosomal stalk of the 50S ribosomal subunit. Interacts with L10 and the large rRNA to form the base of the stalk. L10 forms an elongated spine to which L12 dimers bind in a sequential fashion forming a multimeric L10(L12)X complex. In terms of processing, one or more lysine residues are methylated.

Its function is as follows. Forms part of the ribosomal stalk which helps the ribosome interact with GTP-bound translation factors. This chain is Large ribosomal subunit protein uL11, found in Marinomonas sp. (strain MWYL1).